The chain runs to 864 residues: Microtubule-associated protein TORTIFOLIA1 (864 aa).

The interval 1 to 26 (MSTPTTSGSAAKPTRPARSSSLATRS) is disordered. Positions 17 to 26 (ARSSSLATRS) are enriched in polar residues. 5 HEAT repeats span residues 76–113 (ETLPMFLNCLYDSCSDPKPAVKKECLHLLSYVCSLHCD), 117–154 (AHLTKIIAQIVKRLKDSDSGVRDACRDTIGALSGIYLK), 167–204 (LAVGLFVKPLFEAMGEQNKVVQSGASMCMARMVESAAS), 208–245 (TSFQKLCPRICKLLSNSSFLAKASLLPVVSSLSQVGAI), and 248–285 (QSLESLLESIHDCLGSTDWVTRKAAAETLTALASHSSG). The disordered stretch occupies residues 329 to 353 (DGASDDSKLSASEQLGSEKNGEKRS). Position 414 is a phosphoserine (Ser-414). The disordered stretch occupies residues 426 to 504 (NDEEESGLDD…QSEGSFTSNR (79 aa)). Positions 439–448 (MGSSNRLKNT) are enriched in polar residues. Residues 449-459 (QADDKQVKGRF) show a composition bias toward basic and acidic residues. A compositionally biased stretch (polar residues) spans 489–504 (VSNTDNQSEGSFTSNR). Residues 508-561 (SAIQRQLLQLERQQTNLMNMLQEFIGGSHDSMVTLEGRVRGLERIVEDMARDLS) adopt a coiled-coil conformation. The disordered stretch occupies residues 615 to 670 (DDWFIPPHAASRNGQAGPRRSPRSEQYENEHMGNGRRGWDNKASGTIRFGEGPSAR). Residues 636–654 (PRSEQYENEHMGNGRRGWD) show a composition bias toward basic and acidic residues.

In terms of assembly, interacts with WAV3. In terms of tissue distribution, expressed in roots, hypocotyls, stems, flowers, siliques, inflorescences, petioles, cotyledons, and leaves. Particularly present in root tips and shoot meristems.

The protein localises to the cytoplasm. It localises to the cytoskeleton. Plant-specific microtubule-associated protein (MAP) that regulates the orientation of cortical microtubules and the direction of organ growth. Determines microtubule organization by modulating microtubule severing. The sequence is that of Microtubule-associated protein TORTIFOLIA1 from Arabidopsis thaliana (Mouse-ear cress).